The following is an 86-amino-acid chain: MANNKSAKKRAIQAEKRRQHNASRRSMMRTYMKKTVAAIAAGDKEAATAAFAVVTPILDRMATKGLIHKNKAARHKSRFFAAINAL.

Residues 1-27 (MANNKSAKKRAIQAEKRRQHNASRRSM) form a disordered region.

This sequence belongs to the bacterial ribosomal protein bS20 family.

Binds directly to 16S ribosomal RNA. The protein is Small ribosomal subunit protein bS20 of Vibrio cholerae serotype O1 (strain ATCC 39541 / Classical Ogawa 395 / O395).